The chain runs to 64 residues: UPF0434 protein Bcen_1934 (64 aa).

Belongs to the UPF0434 family.

This Burkholderia orbicola (strain AU 1054) protein is UPF0434 protein Bcen_1934.